Reading from the N-terminus, the 264-residue chain is Forkhead box protein pes-1 (264 aa).

Disordered regions lie at residues Asp15–Lys36 and Asp50–Arg93. Low complexity predominate over residues Asp50–Ser64. Positions Glu70 to Ser89 are enriched in polar residues. Positions Arg93–Arg186 form a DNA-binding region, fork-head.

It is found in the nucleus. It localises to the cytoplasm. Transcription factor. Plays a role in embryogenesis and later development, perhaps acting redundantly with forkhead protein fkh-2. In Caenorhabditis elegans, this protein is Forkhead box protein pes-1.